Reading from the N-terminus, the 240-residue chain is 7-cyano-7-deazaguanine synthase (240 aa).

9–19 (FSGGLDSTACL) is a binding site for ATP. Residues C195, C210, C213, and C216 each contribute to the Zn(2+) site.

It belongs to the QueC family. Requires Zn(2+) as cofactor.

The enzyme catalyses 7-carboxy-7-deazaguanine + NH4(+) + ATP = 7-cyano-7-deazaguanine + ADP + phosphate + H2O + H(+). Its pathway is purine metabolism; 7-cyano-7-deazaguanine biosynthesis. Its function is as follows. Catalyzes the ATP-dependent conversion of 7-carboxy-7-deazaguanine (CDG) to 7-cyano-7-deazaguanine (preQ(0)). The protein is 7-cyano-7-deazaguanine synthase of Pyrococcus furiosus (strain ATCC 43587 / DSM 3638 / JCM 8422 / Vc1).